The following is a 65-amino-acid chain: Large ribosomal subunit protein bL35 (65 aa).

Basic residues predominate over residues 1–15 (MPKMKTKSSAKKRFS). The segment at 1–21 (MPKMKTKSSAKKRFSIRAGGS) is disordered.

Belongs to the bacterial ribosomal protein bL35 family.

This is Large ribosomal subunit protein bL35 from Dechloromonas aromatica (strain RCB).